The sequence spans 493 residues: Cysteine--tRNA ligase (493 aa).

Residue Cys-29 coordinates Zn(2+). The 'HIGH' region signature appears at Ala-31–His-41. The Zn(2+) site is built by Cys-214, His-239, and Glu-243. The short motif at Lys-270–Ser-274 is the 'KMSKS' region element. Lys-273 contributes to the ATP binding site.

The protein belongs to the class-I aminoacyl-tRNA synthetase family. Monomer. Requires Zn(2+) as cofactor.

It localises to the cytoplasm. It catalyses the reaction tRNA(Cys) + L-cysteine + ATP = L-cysteinyl-tRNA(Cys) + AMP + diphosphate. The protein is Cysteine--tRNA ligase of Renibacterium salmoninarum (strain ATCC 33209 / DSM 20767 / JCM 11484 / NBRC 15589 / NCIMB 2235).